The primary structure comprises 234 residues: Leucyl/phenylalanyl-tRNA--protein transferase (234 aa).

This sequence belongs to the L/F-transferase family.

The protein localises to the cytoplasm. The enzyme catalyses N-terminal L-lysyl-[protein] + L-leucyl-tRNA(Leu) = N-terminal L-leucyl-L-lysyl-[protein] + tRNA(Leu) + H(+). It carries out the reaction N-terminal L-arginyl-[protein] + L-leucyl-tRNA(Leu) = N-terminal L-leucyl-L-arginyl-[protein] + tRNA(Leu) + H(+). It catalyses the reaction L-phenylalanyl-tRNA(Phe) + an N-terminal L-alpha-aminoacyl-[protein] = an N-terminal L-phenylalanyl-L-alpha-aminoacyl-[protein] + tRNA(Phe). Functions in the N-end rule pathway of protein degradation where it conjugates Leu, Phe and, less efficiently, Met from aminoacyl-tRNAs to the N-termini of proteins containing an N-terminal arginine or lysine. This Shigella dysenteriae serotype 1 (strain Sd197) protein is Leucyl/phenylalanyl-tRNA--protein transferase.